The chain runs to 599 residues: Elongation factor 4 (599 aa).

The 183-residue stretch at 5-187 folds into the tr-type G domain; the sequence is SHIRNFSIIA…RLVAVIPPPT (183 aa). Residues 17–22 and 134–137 each bind GTP; these read DHGKST and NKMD.

Belongs to the TRAFAC class translation factor GTPase superfamily. Classic translation factor GTPase family. LepA subfamily.

Its subcellular location is the cell inner membrane. It catalyses the reaction GTP + H2O = GDP + phosphate + H(+). Required for accurate and efficient protein synthesis under certain stress conditions. May act as a fidelity factor of the translation reaction, by catalyzing a one-codon backward translocation of tRNAs on improperly translocated ribosomes. Back-translocation proceeds from a post-translocation (POST) complex to a pre-translocation (PRE) complex, thus giving elongation factor G a second chance to translocate the tRNAs correctly. Binds to ribosomes in a GTP-dependent manner. This chain is Elongation factor 4, found in Stutzerimonas stutzeri (strain A1501) (Pseudomonas stutzeri).